The following is a 716-amino-acid chain: Delta-1-pyrroline-5-carboxylate synthase 1 (716 aa).

Residues 1 to 296 (MASVDPSRSF…WESSKDVSTR (296 aa)) are glutamate 5-kinase. Substrate is bound by residues S60, D157, and N176. Residues 196 to 197 (SD), 202 to 207 (YSGPPS), and 236 to 242 (RGGMTAK) contribute to the ATP site. Positions 297–716 (EMAVAARDCS…VYTHKSLPLQ (420 aa)) are gamma-glutamyl phosphate reductase.

The protein in the N-terminal section; belongs to the glutamate 5-kinase family. In the C-terminal section; belongs to the gamma-glutamyl phosphate reductase family. In terms of tissue distribution, expressed at high levels in leaves.

The catalysed reaction is L-glutamate + ATP = L-glutamyl 5-phosphate + ADP. The enzyme catalyses L-glutamate 5-semialdehyde + phosphate + NADP(+) = L-glutamyl 5-phosphate + NADPH + H(+). The protein operates within amino-acid biosynthesis; L-proline biosynthesis; L-glutamate 5-semialdehyde from L-glutamate: step 1/2. Its pathway is amino-acid biosynthesis; L-proline biosynthesis; L-glutamate 5-semialdehyde from L-glutamate: step 2/2. With respect to regulation, feedback regulated by proline. Its function is as follows. P5CS plays a key role in proline biosynthesis, leading to osmoregulation in plants. Involved in abiotic stress tolerance. This is Delta-1-pyrroline-5-carboxylate synthase 1 from Oryza sativa subsp. japonica (Rice).